The following is a 386-amino-acid chain: Succinate--CoA ligase [ADP-forming] subunit beta (386 aa).

The 236-residue stretch at 9–244 (KAVLRSYGVS…LDEEDAKEIE (236 aa)) folds into the ATP-grasp domain. ATP is bound by residues Lys46, 53-55 (GRG), Glu99, Cys102, and Glu107. 2 residues coordinate Mg(2+): Asn199 and Asp213. Residues Asn264 and 321-323 (GIM) each bind substrate.

This sequence belongs to the succinate/malate CoA ligase beta subunit family. As to quaternary structure, heterotetramer of two alpha and two beta subunits. It depends on Mg(2+) as a cofactor.

It carries out the reaction succinate + ATP + CoA = succinyl-CoA + ADP + phosphate. It catalyses the reaction GTP + succinate + CoA = succinyl-CoA + GDP + phosphate. Its pathway is carbohydrate metabolism; tricarboxylic acid cycle; succinate from succinyl-CoA (ligase route): step 1/1. Its function is as follows. Succinyl-CoA synthetase functions in the citric acid cycle (TCA), coupling the hydrolysis of succinyl-CoA to the synthesis of either ATP or GTP and thus represents the only step of substrate-level phosphorylation in the TCA. The beta subunit provides nucleotide specificity of the enzyme and binds the substrate succinate, while the binding sites for coenzyme A and phosphate are found in the alpha subunit. This Bacillus anthracis (strain A0248) protein is Succinate--CoA ligase [ADP-forming] subunit beta.